A 133-amino-acid polypeptide reads, in one-letter code: Profilin Sal k 4.0101 (133 aa).

A disulfide bridge links cysteine 95 with cysteine 117.

This sequence belongs to the profilin family. In terms of assembly, occurs in many kinds of cells as a complex with monomeric actin in a 1:1 ratio. As to expression, expressed in pollen.

Its subcellular location is the cytoplasm. The protein resides in the cytoskeleton. Binds to actin and affects the structure of the cytoskeleton. At high concentrations, profilin prevents the polymerization of actin, whereas it enhances it at low concentrations. The polypeptide is Profilin Sal k 4.0101 (Kali turgidum (Prickly saltwort)).